We begin with the raw amino-acid sequence, 422 residues long: MTAEKITQGTEGLNVPNEPIIPFIIGDGIGPDIWKAASRVIDAAVEKAYNGEKRIEWKEVLAGQKAFDTTGEWLPQETLDTIKEYLIAVKGPLTTPIGGGIRSLNVALRQELDLFTCLRPVRWFKGVPSPVKRPQDVDMVIFRENTEDIYAGIEFKEGTTEVKKVIDFLQNEMGATNIRFPETSGIGIKPVSKEGTERLVRAAIQYAIDNNRKSVTLVHKGNIMKFTEGSFKQWGYDLALSEFGDQVFTWQQYDEIVENEGRDAANAAQEKAEKEGKIIIKDSIADIFLQQILTRPAEHDVVATMNLNGDYISDALAAQVGGIGIAPGANINYETGHAIFEATHGTAPKYAGLNKVNPSSVILSSVLMLEHLGWQEAADKITDSIEDTIASKVVTYDFARLMDGAEEVSTSAFADELIKNLK.

Threonine 94 serves as a coordination point for NADP(+). Residues serine 103, asparagine 105, arginine 109, arginine 119, and arginine 143 each coordinate D-threo-isocitrate. Aspartate 310 serves as a coordination point for Mg(2+). Residues 344-350 (HGTAPKY), asparagine 357, tyrosine 396, and arginine 400 contribute to the NADP(+) site.

This sequence belongs to the isocitrate and isopropylmalate dehydrogenases family. As to quaternary structure, homodimer. Mg(2+) is required as a cofactor. The cofactor is Mn(2+).

The enzyme catalyses D-threo-isocitrate + NADP(+) = 2-oxoglutarate + CO2 + NADPH. Functionally, catalyzes the oxidative decarboxylation of isocitrate to 2-oxoglutarate and carbon dioxide with the concomitant reduction of NADP(+). The sequence is that of Isocitrate dehydrogenase [NADP] (icd) from Staphylococcus aureus (strain COL).